The chain runs to 395 residues: Synaptotagmin-8 (395 aa).

Over 1 to 44 (MQADRSMKMGHVSNPLSTSAPVDATAGPNLIPDLITKIPWPRWI) the chain is Extracellular. The chain crosses the membrane as a helical; Signal-anchor for type III membrane protein span at residues 45-65 (LFIAILAAGVLLVSCLLCVIC). Over 66–395 (YCCHRQRHRK…PRLPLLRPRS (330 aa)) the chain is Cytoplasmic. C2 domains are found at residues 113–229 (PWGQ…ESWY) and 241–370 (QMGE…AQWH).

It belongs to the synaptotagmin family. In terms of assembly, homodimer or homooligomer. Homodimerization and homooligomerization do not depend on Ca(2+). Interacts with SYNCRIP isoform 2 C-terminus. Binds inositol 1,3,4,5-tetrakisphosphate (IP4). Binds to AP2 in a Ca(2+)-independent manner. Interacts with STX1A, STX1B and STX2; the interaction is Ca(2+)-dependent. Ubiquitous. Strongly expressed in heart, kidney, cerebral cortex, pancreas, and many insulin-secreting cells; lower expression in spleen. Broadly distributed in kidney.

Its subcellular location is the cell membrane. The protein localises to the cytoplasmic vesicle. The protein resides in the secretory vesicle. It is found in the acrosome. Functionally, involved in the trafficking and exocytosis of secretory vesicles in non-neuronal tissues. Mediates Ca(2+)-regulation of exocytosis acrosomal reaction in sperm. May mediate Ca(2+)-regulation of exocytosis in insulin secreted cells. This chain is Synaptotagmin-8 (Syt8), found in Rattus norvegicus (Rat).